Consider the following 254-residue polypeptide: Proline-rich protein 23A3 (254 aa).

Disordered regions lie at residues 1–50 (MLRT…LEAP), 161–196 (ASPP…GAEQ), and 212–254 (PFPG…LVYE). The segment covering 35 to 50 (EPACPEPLAQPELEAP) has biased composition (low complexity). A compositionally biased stretch (pro residues) spans 214 to 241 (PGSPLQPLPPSPSRNPQEQLPPCPPCSP). Basic residues predominate over residues 243 to 254 (APRRARKRLVYE).

The protein belongs to the PRR23 family.

This Mus musculus (Mouse) protein is Proline-rich protein 23A3.